Here is a 247-residue protein sequence, read N- to C-terminus: Coproheme decarboxylase (247 aa).

Fe-coproporphyrin III is bound by residues arginine 129, 143–147 (YPMDK), histidine 170, glutamine 183, and serine 221. Tyrosine 143 is an active-site residue.

This sequence belongs to the ChdC family. Type 1 subfamily. It depends on Fe-coproporphyrin III as a cofactor.

It carries out the reaction Fe-coproporphyrin III + 2 H2O2 + 2 H(+) = heme b + 2 CO2 + 4 H2O. The catalysed reaction is Fe-coproporphyrin III + H2O2 + H(+) = harderoheme III + CO2 + 2 H2O. It catalyses the reaction harderoheme III + H2O2 + H(+) = heme b + CO2 + 2 H2O. It functions in the pathway porphyrin-containing compound metabolism; protoheme biosynthesis. In terms of biological role, involved in coproporphyrin-dependent heme b biosynthesis. Catalyzes the decarboxylation of Fe-coproporphyrin III (coproheme) to heme b (protoheme IX), the last step of the pathway. The reaction occurs in a stepwise manner with a three-propionate intermediate. The chain is Coproheme decarboxylase from Bacillus cereus (strain AH820).